The following is a 953-amino-acid chain: Translation initiation factor IF-2 (953 aa).

Residues 55-340 form a disordered region; it reads GVTTEAPAAS…KSKRQKRNEY (286 aa). Residues 81–93 are compositionally biased toward low complexity; sequence KPAATPQQAAKPA. Residues 110-119 are compositionally biased toward pro residues; that stretch reads PKPAAKPVPK. Composition is skewed to low complexity over residues 123-133 and 143-160; these read SAAKAESSAPK and KPAAQSSTTATPGSMPRP. Residues 202–219 are compositionally biased toward gly residues; it reads PGGGPRPGGNRPQGGQGG. A compositionally biased stretch (low complexity) spans 233–248; sequence QPRPQGGSRSQQSGGQ. Residues 280 to 323 are compositionally biased toward gly residues; that stretch reads NGRGGAGGQGGRPGFGGGRPGGGGSAGGRGGRRGGTAGAFGRPG. Over residues 327–336 the composition is skewed to basic residues; the sequence is RKGRKSKRQK. The region spanning 449–621 is the tr-type G domain; it reads KRPPVVTVMG…VLLTADASLD (173 aa). Positions 458 to 465 are G1; that stretch reads GHVDHGKT. 458 to 465 serves as a coordination point for GTP; sequence GHVDHGKT. Positions 483–487 are G2; the sequence is GITQG. The segment at 508–511 is G3; the sequence is DTPG. Residues 508–512 and 562–565 contribute to the GTP site; these read DTPGH and NKID. The interval 562–565 is G4; that stretch reads NKID. Residues 598–600 form a G5 region; that stretch reads SAK.

This sequence belongs to the TRAFAC class translation factor GTPase superfamily. Classic translation factor GTPase family. IF-2 subfamily.

The protein resides in the cytoplasm. In terms of biological role, one of the essential components for the initiation of protein synthesis. Protects formylmethionyl-tRNA from spontaneous hydrolysis and promotes its binding to the 30S ribosomal subunits. Also involved in the hydrolysis of GTP during the formation of the 70S ribosomal complex. This is Translation initiation factor IF-2 from Corynebacterium diphtheriae (strain ATCC 700971 / NCTC 13129 / Biotype gravis).